A 186-amino-acid polypeptide reads, in one-letter code: Tumor necrosis factor alpha-induced protein 8-like protein 1 (186 aa).

The protein belongs to the TNFAIP8 family. Interacts with FBXW5; TNFAIP8L1 competes with TSC2 to bind FBXW5 increasing TSC2 stability by preventing its ubiquitination. In terms of tissue distribution, high expression detected in most carcinoma cell lines, especially in cells transformed with virus genomes.

It localises to the cytoplasm. Functionally, acts as a negative regulator of mTOR activity. This chain is Tumor necrosis factor alpha-induced protein 8-like protein 1 (TNFAIP8L1), found in Homo sapiens (Human).